Reading from the N-terminus, the 366-residue chain is Glucose 1-dehydrogenase 2 (366 aa).

Cys39 lines the Zn(2+) pocket. Residue Ser41 participates in substrate binding. Zn(2+) is bound by residues His66 and Glu67. Asn90, Glu116, Gln152, and Asp156 together coordinate substrate. Gln152 contributes to the Zn(2+) binding site. Residues 212–214 (NRR), 277–279 (FGF), 305–307 (LIN), and Lys354 each bind NADP(+). Asn307 contacts substrate.

Belongs to the zinc-containing alcohol dehydrogenase family. Glucose 1-dehydrogenase subfamily. Requires Zn(2+) as cofactor.

The enzyme catalyses D-glucose + NAD(+) = D-glucono-1,5-lactone + NADH + H(+). The catalysed reaction is D-glucose + NADP(+) = D-glucono-1,5-lactone + NADPH + H(+). In terms of biological role, catalyzes the NAD(P)(+)-dependent oxidation of D-glucose to D-gluconate via gluconolactone. Can utilize both NAD(+) and NADP(+) as electron acceptor. Is involved in the degradation of glucose through a non-phosphorylative variant of the Entner-Doudoroff pathway. This Caldivirga maquilingensis (strain ATCC 700844 / DSM 13496 / JCM 10307 / IC-167) protein is Glucose 1-dehydrogenase 2.